A 186-amino-acid polypeptide reads, in one-letter code: NADH dehydrogenase [ubiquinone] 1 beta subcomplex subunit 8, mitochondrial (186 aa).

The transit peptide at 1 to 28 (MAVARAGVLGVQWLQRASWNVMPLGART) directs the protein to the mitochondrion. The helical transmembrane segment at 133–153 (LFGFLAFMIFMCWVGEVYPVY) threads the bilayer.

Belongs to the complex I NDUFB8 subunit family. In terms of assembly, complex I is composed of 45 different subunits.

It is found in the mitochondrion inner membrane. Its function is as follows. Accessory subunit of the mitochondrial membrane respiratory chain NADH dehydrogenase (Complex I), that is believed not to be involved in catalysis. Complex I functions in the transfer of electrons from NADH to the respiratory chain. The immediate electron acceptor for the enzyme is believed to be ubiquinone. This chain is NADH dehydrogenase [ubiquinone] 1 beta subcomplex subunit 8, mitochondrial (NDUFB8), found in Pongo abelii (Sumatran orangutan).